The primary structure comprises 154 residues: MSLIPSIFGGPRSNVFDPFSLDMWDPFKDFHVPTSSVSAENSAFVNTRVDWKETQEAHVLKADIPGLKKEEVKVQIEDDRVLQISGERNVEKEDKNDTWHRVDRSSGKFMRRFRLPENAKVEQVKACMENGVLTVTIPKEEVKKSDVKPIEISG.

A sHSP domain is found at 40–154 (ENSAFVNTRV…SDVKPIEISG (115 aa)).

The protein belongs to the small heat shock protein (HSP20) family. Forms oligomeric structures.

It localises to the cytoplasm. This Glycine max (Soybean) protein is 17.6 kDa class I heat shock protein (HSP17.6-L).